Here is a 95-residue protein sequence, read N- to C-terminus: UPF0235 protein Sama_2480 (95 aa).

Belongs to the UPF0235 family.

The polypeptide is UPF0235 protein Sama_2480 (Shewanella amazonensis (strain ATCC BAA-1098 / SB2B)).